Reading from the N-terminus, the 194-residue chain is MSAITITDAAHDYLAELLAKQNGTDIGIRIFITQPGTPAAETCLAYCKPHERHPDDIAQALKSFTLWIDAVSEPFLEDAIVDYANDRMGGQLTIKAPNAKVPMIDEDSPLGERINYYLQTEINPGLASHGGQVSLVDIVEEGIAVLRFGGGCQGCGMVDMTLKDGVEKTLLERIPDLKGVRDATDHSNRENAYY.

2 residues coordinate [4Fe-4S] cluster: Cys152 and Cys155.

It belongs to the NfuA family. As to quaternary structure, homodimer. The cofactor is [4Fe-4S] cluster.

In terms of biological role, involved in iron-sulfur cluster biogenesis. Binds a 4Fe-4S cluster, can transfer this cluster to apoproteins, and thereby intervenes in the maturation of Fe/S proteins. Could also act as a scaffold/chaperone for damaged Fe/S proteins. This Azotobacter vinelandii (strain DJ / ATCC BAA-1303) protein is Fe/S biogenesis protein NfuA.